A 434-amino-acid polypeptide reads, in one-letter code: Glutamate-1-semialdehyde 2,1-aminomutase 1 (434 aa).

The residue at position 270 (Lys-270) is an N6-(pyridoxal phosphate)lysine.

This sequence belongs to the class-III pyridoxal-phosphate-dependent aminotransferase family. HemL subfamily. Homodimer. Pyridoxal 5'-phosphate is required as a cofactor.

The protein localises to the cytoplasm. The catalysed reaction is (S)-4-amino-5-oxopentanoate = 5-aminolevulinate. It participates in porphyrin-containing compound metabolism; protoporphyrin-IX biosynthesis; 5-aminolevulinate from L-glutamyl-tRNA(Glu): step 2/2. In Bacillus cereus (strain AH187), this protein is Glutamate-1-semialdehyde 2,1-aminomutase 1.